The following is a 705-amino-acid chain: Phosphoribosylformylglycinamidine synthase subunit PurL (705 aa).

The active site involves histidine 32. Tyrosine 35 lines the ATP pocket. Glutamate 76 lines the Mg(2+) pocket. Residues 77–80 (SHNH) and arginine 99 contribute to the substrate site. Residue histidine 78 is the Proton acceptor of the active site. Residue aspartate 100 coordinates Mg(2+). Glutamine 224 serves as a coordination point for substrate. Position 252 (aspartate 252) interacts with Mg(2+). 296–298 (ESQ) lines the substrate pocket. Positions 471 and 508 each coordinate ATP. A Mg(2+)-binding site is contributed by asparagine 509. Position 511 (serine 511) interacts with substrate.

It belongs to the FGAMS family. In terms of assembly, monomer. Part of the FGAM synthase complex composed of 1 PurL, 1 PurQ and 2 PurS subunits.

It is found in the cytoplasm. The enzyme catalyses N(2)-formyl-N(1)-(5-phospho-beta-D-ribosyl)glycinamide + L-glutamine + ATP + H2O = 2-formamido-N(1)-(5-O-phospho-beta-D-ribosyl)acetamidine + L-glutamate + ADP + phosphate + H(+). The protein operates within purine metabolism; IMP biosynthesis via de novo pathway; 5-amino-1-(5-phospho-D-ribosyl)imidazole from N(2)-formyl-N(1)-(5-phospho-D-ribosyl)glycinamide: step 1/2. Its function is as follows. Part of the phosphoribosylformylglycinamidine synthase complex involved in the purines biosynthetic pathway. Catalyzes the ATP-dependent conversion of formylglycinamide ribonucleotide (FGAR) and glutamine to yield formylglycinamidine ribonucleotide (FGAM) and glutamate. The FGAM synthase complex is composed of three subunits. PurQ produces an ammonia molecule by converting glutamine to glutamate. PurL transfers the ammonia molecule to FGAR to form FGAM in an ATP-dependent manner. PurS interacts with PurQ and PurL and is thought to assist in the transfer of the ammonia molecule from PurQ to PurL. This Pyrococcus abyssi (strain GE5 / Orsay) protein is Phosphoribosylformylglycinamidine synthase subunit PurL.